We begin with the raw amino-acid sequence, 323 residues long: Aldo-keto reductase family 1 member C2 (323 aa).

Residues 20-24 and D50 contribute to the NADP(+) site; that span reads GFGTY. Y24 is a binding site for substrate. Catalysis depends on Y55, which acts as the Proton donor. H117 serves as a coordination point for substrate. NADP(+) contacts are provided by residues 166 to 167, Q190, and 216 to 222; these read SN and YSALGSH. H222 and W227 together coordinate substrate. 270-280 is an NADP(+) binding site; it reads KSYNEQRIRQN.

Belongs to the aldo/keto reductase family. Expressed in fetal testes. Expressed in fetal and adult adrenal glands.

It localises to the cytoplasm. It is found in the cytosol. The catalysed reaction is a 3alpha-hydroxysteroid + NADP(+) = a 3-oxosteroid + NADPH + H(+). It catalyses the reaction a 3alpha-hydroxysteroid + NAD(+) = a 3-oxosteroid + NADH + H(+). The enzyme catalyses 5alpha-androstane-3alpha,17beta-diol + NADP(+) = 17beta-hydroxy-5alpha-androstan-3-one + NADPH + H(+). It carries out the reaction 5alpha-androstane-3alpha,17beta-diol + NAD(+) = 17beta-hydroxy-5alpha-androstan-3-one + NADH + H(+). The catalysed reaction is 5alpha-androstane-3alpha,17beta-diol + NAD(+) = androsterone + NADH + H(+). It catalyses the reaction 17beta-estradiol + NADP(+) = estrone + NADPH + H(+). The enzyme catalyses 17beta-estradiol + NAD(+) = estrone + NADH + H(+). It carries out the reaction (20S)-hydroxypregn-4-en-3-one + NADP(+) = progesterone + NADPH + H(+). The catalysed reaction is (20S)-hydroxypregn-4-en-3-one + NAD(+) = progesterone + NADH + H(+). It catalyses the reaction androsterone + NADP(+) = 5alpha-androstan-3,17-dione + NADPH + H(+). The enzyme catalyses (3beta,5alpha,17beta)-3-hydroxy-androstan-17-yl sulfate + NADP(+) = 5alpha-dihydrotestosterone sulfate + NADPH + H(+). It carries out the reaction (1R,2R)-1,2-dihydrobenzene-1,2-diol + NADP(+) = catechol + NADPH + H(+). The catalysed reaction is (S)-indan-1-ol + NAD(+) = indan-1-one + NADH + H(+). It catalyses the reaction (S)-indan-1-ol + NADP(+) = indan-1-one + NADPH + H(+). Its pathway is steroid metabolism. With respect to regulation, inhibited by hexestrol with an IC(50) of 2.8 uM, 1,10-phenanthroline with an IC(50) of 2100 uM, 1,7-phenanthroline with an IC(50) of 1500 uM, flufenamic acid with an IC(50) of 0.9 uM, indomethacin with an IC(50) of 75 uM, ibuprofen with an IC(50) of 6.9 uM, lithocholic acid with an IC(50) of 0.07 uM, ursodeoxycholic acid with an IC(50) of 0.08 uM and chenodeoxycholic acid with an IC(50) of 0.13 uM. The oxidation reaction is inhibited by low micromolar concentrations of NADPH. Functionally, cytosolic aldo-keto reductase that catalyzes the NADH and NADPH-dependent reduction of ketosteroids to hydroxysteroids. Most probably acts as a reductase in vivo since the oxidase activity measured in vitro is inhibited by physiological concentrations of NADPH. Displays a broad positional specificity acting on positions 3, 17 and 20 of steroids and regulates the metabolism of hormones like estrogens and androgens. Works in concert with the 5-alpha/5-beta-steroid reductases to convert steroid hormones into the 3-alpha/5-alpha and 3-alpha/5-beta-tetrahydrosteroids. Catalyzes the inactivation of the most potent androgen 5-alpha-dihydrotestosterone (5-alpha-DHT) to 5-alpha-androstane-3-alpha,17-beta-diol (3-alpha-diol). Also specifically able to produce 17beta-hydroxy-5alpha-androstan-3-one/5alphaDHT. May also reduce conjugated steroids such as 5alpha-dihydrotestosterone sulfate. Displays affinity for bile acids. This Homo sapiens (Human) protein is Aldo-keto reductase family 1 member C2 (AKR1C2).